We begin with the raw amino-acid sequence, 543 residues long: Formate--tetrahydrofolate ligase (543 aa).

Residue 54–61 (TPAGEGKT) participates in ATP binding.

It belongs to the formate--tetrahydrofolate ligase family.

It catalyses the reaction (6S)-5,6,7,8-tetrahydrofolate + formate + ATP = (6R)-10-formyltetrahydrofolate + ADP + phosphate. It functions in the pathway one-carbon metabolism; tetrahydrofolate interconversion. In Thermus thermophilus (strain ATCC BAA-163 / DSM 7039 / HB27), this protein is Formate--tetrahydrofolate ligase.